Here is a 522-residue protein sequence, read N- to C-terminus: Glutamate--cysteine ligase (522 aa).

The protein belongs to the glutamate--cysteine ligase type 1 family. Type 1 subfamily.

It carries out the reaction L-cysteine + L-glutamate + ATP = gamma-L-glutamyl-L-cysteine + ADP + phosphate + H(+). It participates in sulfur metabolism; glutathione biosynthesis; glutathione from L-cysteine and L-glutamate: step 1/2. The polypeptide is Glutamate--cysteine ligase (Vibrio campbellii (strain ATCC BAA-1116)).